The primary structure comprises 795 residues: Phenylalanine--tRNA ligase beta subunit (795 aa).

The tRNA-binding domain occupies 39-148 (AGTFNGVKVG…IDAPIGMDFR (110 aa)). The region spanning 401 to 476 (PKPNKVALRR…RIYGYDNIPN (76 aa)) is the B5 domain. Mg(2+) is bound by residues Asp-454, Asp-460, Glu-463, and Glu-464. The FDX-ACB domain occupies 701-794 (SKFPANRRDI…VSEKFGASLR (94 aa)).

This sequence belongs to the phenylalanyl-tRNA synthetase beta subunit family. Type 1 subfamily. Tetramer of two alpha and two beta subunits. Requires Mg(2+) as cofactor.

The protein resides in the cytoplasm. It carries out the reaction tRNA(Phe) + L-phenylalanine + ATP = L-phenylalanyl-tRNA(Phe) + AMP + diphosphate + H(+). This is Phenylalanine--tRNA ligase beta subunit from Vibrio vulnificus (strain CMCP6).